We begin with the raw amino-acid sequence, 334 residues long: Nucleoid-associated protein ESA_01050 (334 aa).

This sequence belongs to the YejK family.

The protein localises to the cytoplasm. It is found in the nucleoid. This chain is Nucleoid-associated protein ESA_01050, found in Cronobacter sakazakii (strain ATCC BAA-894) (Enterobacter sakazakii).